The primary structure comprises 2065 residues: Cytoskeleton-associated protein 5-A (2065 aa).

2 TOG regions span residues 1–240 and 264–515; these read MGDD…DLKA and VDAY…KETK. 7 HEAT repeats span residues 120–157, 160–197, 270–311, 314–352, 356–393, 395–432, and 436–477; these read EKAE…EFGS, MTLK…WIRD, LEAV…NPKI, GDFA…GLRK, SYAG…TTTL, NISE…STLP, and LKPF…VNPF. The disordered stretch occupies residues 500–574; that stretch reads NGKKGGAAAG…GATAKGKKAV (75 aa). Over residues 538 to 568 the composition is skewed to low complexity; it reads KAAAAPKKAPAAKPGGPVKKAKAPASSGATA. Residues 644 to 808 form a TOG 3 region; the sequence is KPGFKETNFQ…LSQIDAEFEK (165 aa). HEAT repeat units lie at residues 652-689 and 748-785; these read FQVM…KVGD and INVK…YMGA. Positions 809-849 are disordered; the sequence is MKGQTPPVSIRGSKHGSGRDEGEEGEEQDEDAPADVTDLLP. The segment covering 829-841 has biased composition (acidic residues); sequence EGEEGEEQDEDAP. A TOG 4 region spans residues 846–1090; it reads DLLPRTDISD…AGPPGKASSK (245 aa). HEAT repeat units lie at residues 852–889, 892–929, 933–970, and 1015–1052; these read DISD…EAKF, PSIG…AMGH, QHVK…QTGM, and CVPY…KMSK. Residues 1074 to 1115 are compositionally biased toward low complexity; it reads ASMPAKPAGPPGKASSKQPPAVAQASASPPPAASSDSGSSTS. The tract at residues 1074–1192 is disordered; the sequence is ASMPAKPAGP…AKDEEDKSGP (119 aa). Residues 1126-1163 are compositionally biased toward polar residues; the sequence is PGTQASKAKTQSVSSEGNTSLNPSNTSLTPSKANTSLS. Residues 1150-1235 are interaction with microtubule lattice; sequence NTSLTPSKAN…IEQLKTQMSP (86 aa). The interval 1191-1460 is TOG 5; it reads GPIYIIVPNG…ERIKRAGKKQ (270 aa). HEAT repeat units follow at residues 1251 to 1288, 1295 to 1318, 1319 to 1355, 1357 to 1390, and 1395 to 1432; these read QRQI…RFFD, MKCL…LTEM, EGTS…VYPA, KMFN…SYGM, and PTPA…VHGE. Disordered stretches follow at residues 1982–2001 and 2028–2065; these read DNAK…KSSA and VELD…SSRK. The segment at 2002 to 2065 is interaction with tacc3; sequence PAVVSSTDML…RLERIKSSRK (64 aa). A compositionally biased stretch (low complexity) spans 2038 to 2048; the sequence is STTTSSSASST. Residues 2051–2065 are compositionally biased toward basic and acidic residues; the sequence is DDLKKRLERIKSSRK.

Belongs to the TOG/XMAP215 family. In terms of assembly, interacts with tacc3; two molecules of ckap5 interact with 1 molecule of tacc3 probably mediated by coiled coil domains forming a four-helix bundle. Interacts with tacc3 and clathrin forming the TACC3/ch-TOG/clathrin complex located at spindle inter-microtubules bridges. Interacts with ndc80; indicative for an association with the NDC80 comnplex.

It is found in the cytoplasm. Its subcellular location is the cytoskeleton. The protein resides in the spindle pole. It localises to the spindle. The protein localises to the microtubule organizing center. It is found in the centrosome. Its subcellular location is the chromosome. The protein resides in the centromere. It localises to the kinetochore. Its function is as follows. Binds to the plus end of microtubules and regulates microtubule dynamics and microtubule organization. Acts as a processive microtubule polymerase. Promotes cytoplasmic microtubule nucleation and elongation. Plays a major role in organizing spindle poles. In spindle formation protects kinetochore microtubules from depolymerization by kif2c and has an essential role in centrosomal microtubule assembly independently of kif2c activity. Contributes to centrosome integrity. Acts as a component of the TACC3/ch-TOG/clathrin complex proposed to contribute to stabilization of kinetochore fibers of the mitotic spindle by acting as inter-microtubule bridge. Enhances the strength of NDC80 complex-mediated kinetochore-tip microtubule attachments. The polypeptide is Cytoskeleton-associated protein 5-A (ckap5-a) (Xenopus laevis (African clawed frog)).